A 577-amino-acid polypeptide reads, in one-letter code: Adenine deaminase (577 aa).

This sequence belongs to the metallo-dependent hydrolases superfamily. Adenine deaminase family. The cofactor is Mn(2+).

It catalyses the reaction adenine + H2O + H(+) = hypoxanthine + NH4(+). This is Adenine deaminase from Kosmotoga olearia (strain ATCC BAA-1733 / DSM 21960 / TBF 19.5.1).